A 99-amino-acid chain; its full sequence is Osteocalcin (99 aa).

A signal peptide spans 1–23; it reads MRTLSLLTLLALTAFCLSDLAGA. The propeptide occupies 24–49; sequence KPSDSESDKAFMSKQEGSKVVNRLRR. Residues 50–96 enclose the Gla domain; sequence YLNNGLGAPAPYPDPLEPHREVCELNPNCDELADHIGFQDAYKRIYG. At Pro-58 the chain carries Hydroxyproline. Ca(2+) is bound by residues Glu-66, Glu-70, Glu-73, and Asp-79. Residues Glu-66, Glu-70, and Glu-73 each carry the 4-carboxyglutamate modification. Cys-72 and Cys-78 form a disulfide bridge.

The protein belongs to the osteocalcin/matrix Gla protein family. In terms of processing, gamma-carboxyglutamate residues are formed by vitamin K dependent carboxylation by GGCX. These residues are essential for the binding of calcium. Decarboxylation promotes the hormone activity.

The protein resides in the secreted. Functionally, the carboxylated form is one of the main organic components of the bone matrix, which constitutes 1-2% of the total bone protein: it acts as a negative regulator of bone formation and is required to limit bone formation without impairing bone resorption or mineralization. The carboxylated form binds strongly to apatite and calcium. Its function is as follows. The uncarboxylated form acts as a hormone secreted by osteoblasts, which regulates different cellular processes, such as energy metabolism, male fertility and brain development. Regulates of energy metabolism by acting as a hormone favoring pancreatic beta-cell proliferation, insulin secretion and sensitivity and energy expenditure. Uncarboxylated osteocalcin hormone also promotes testosterone production in the testes: acts as a ligand for G protein-coupled receptor GPRC6A at the surface of Leydig cells, initiating a signaling response that promotes the expression of enzymes required for testosterone synthesis in a CREB-dependent manner. Also acts as a regulator of brain development: osteocalcin hormone crosses the blood-brain barrier and acts as a ligand for GPR158 on neurons, initiating a signaling response that prevents neuronal apoptosis in the hippocampus, favors the synthesis of all monoamine neurotransmitters and inhibits that of gamma-aminobutyric acid (GABA). Osteocalcin also crosses the placenta during pregnancy and maternal osteocalcin is required for fetal brain development. The protein is Osteocalcin (Bglap) of Rattus norvegicus (Rat).